The following is a 206-amino-acid chain: Small ribosomal subunit protein uS4 (206 aa).

The S4 RNA-binding domain maps to 96–161 (RRLDNVVYRM…QGRIQAALAL (66 aa)).

The protein belongs to the universal ribosomal protein uS4 family. In terms of assembly, part of the 30S ribosomal subunit. Contacts protein S5. The interaction surface between S4 and S5 is involved in control of translational fidelity.

Functionally, one of the primary rRNA binding proteins, it binds directly to 16S rRNA where it nucleates assembly of the body of the 30S subunit. In terms of biological role, with S5 and S12 plays an important role in translational accuracy. This is Small ribosomal subunit protein uS4 from Legionella pneumophila (strain Corby).